A 1375-amino-acid polypeptide reads, in one-letter code: uncharacterized protein (1375 aa).

The Helicase ATP-binding domain occupies 277-476 (LLASGDIRGG…FGLLFLLRYS (200 aa)). An ATP-binding site is contributed by 290-297 (DEMGMGKT). The RING-type zinc-finger motif lies at 1092–1130 (CIICRDIIKQGFITTCGHLYCSFCLEAWLKHSSSCPMCK). Residues 1190 to 1336 (TISKHLLYLK…QLDKLGLDVP (147 aa)) form the Helicase C-terminal domain.

Belongs to the SNF2/RAD54 helicase family.

The protein resides in the nucleus. This is an uncharacterized protein from Schizosaccharomyces pombe (strain 972 / ATCC 24843) (Fission yeast).